A 479-amino-acid polypeptide reads, in one-letter code: Sodium-coupled neutral amino acid transporter 5 (479 aa).

Residues 1–58 (MAISCAVGMEMQEPKMNGTLSTGAAAGYRQEREGFLPTTHGPAPGRKPVQFLDFEGKT) are Cytoplasmic-facing. Residues 59-81 (SFGMSVFNLSNAIMGSGILGLAY) form a helical membrane-spanning segment. Over 82 to 97 (AMAHTGVIFFLALLLC) the chain is Extracellular. Residues 98 to 118 (IALLSSYSIHLLLTCASVVGI) form a helical membrane-spanning segment. At 119–135 (RAYEQLGQRAFGPAGKV) the chain is on the cytoplasmic side. The chain crosses the membrane as a helical span at residues 136-156 (VVAIIICLHNVGAMSSYLFII). Residues 157 to 176 (KSELPLVIGTFLHMDPEGDW) lie on the Extracellular side of the membrane. A helical membrane pass occupies residues 177–197 (FLKGNLLIILVSLLIILPLAL). Topologically, residues 198 to 202 (MKHLG) are cytoplasmic. Residues 203–223 (YLGYTSSLSLTCMLFFLISVI) form a helical membrane-spanning segment. Residues 224–264 (YKKFQLGCVVSHNDTVVESEPAPLQAFNSSCEAKLFTVDSQ) lie on the Extracellular side of the membrane. Residues Cys-231 and Cys-254 are joined by a disulfide bond. N-linked (GlcNAc...) asparagine glycosylation is present at Asn-236. A helical membrane pass occupies residues 265–285 (MSYTVPIMAFAFVCHPEVLPI). At 286–302 (YTELCCPTQRRMQAVAN) the chain is on the cytoplasmic side. The helical transmembrane segment at 303–323 (MSIGAMFIMYGLTATFGYLTF) threads the bilayer. Over 324-341 (YSTVKAEMLEMYTQEDLL) the chain is Extracellular. Residues 342 to 362 (ILCVRLAVLLAVTLTVPVVLF) traverse the membrane as a helical segment. Over 363 to 383 (PIRRALQQLLFPSKAFSWPRH) the chain is Cytoplasmic. Residues 384–404 (VAIALILLILVNILVICVPTI) form a helical membrane-spanning segment. Over 405-406 (RD) the chain is Extracellular. A helical transmembrane segment spans residues 407 to 427 (IFGFIGSTSAPSLIFILPSVF). The Cytoplasmic segment spans residues 428–446 (YLRIVPADMEPLFSWPKIQ). The helical transmembrane segment at 447 to 467 (ALCFGVLGVLFMAISLGFMFA) threads the bilayer. At 468-479 (NWATGQSRMSGH) the chain is on the extracellular side.

It belongs to the amino acid/polyamine transporter 2 family. Highly expressed in neocortex, hippocampus, striatum and spinal cord by astrocytes (at protein level). Expressed in brain, lung, stomach, kidney, spleen and testis. Expressed in the cerebral cortex between the second and third postnatal week, where expressed exclusively in glial cells from postnatal day 14 to adulthood (at protein level). Expressed in the cerebellum at post natal day 12 (P12). Expressed in liver. Expressed inside the cell body of the astrocytes.

It localises to the cell membrane. It carries out the reaction L-serine(out) + Na(+)(out) + H(+)(in) = L-serine(in) + Na(+)(in) + H(+)(out). The enzyme catalyses L-alanine(out) + Na(+)(out) + H(+)(in) = L-alanine(in) + Na(+)(in) + H(+)(out). The catalysed reaction is glycine(out) + Na(+)(out) + H(+)(in) = glycine(in) + Na(+)(in) + H(+)(out). It catalyses the reaction L-glutamine(out) + Na(+)(out) + H(+)(in) = L-glutamine(in) + Na(+)(in) + H(+)(out). It carries out the reaction L-asparagine(out) + Na(+)(out) + H(+)(in) = L-asparagine(in) + Na(+)(in) + H(+)(out). The enzyme catalyses L-histidine(out) + Na(+)(out) + H(+)(in) = L-histidine(in) + Na(+)(in) + H(+)(out). The catalysed reaction is L-cysteine(out) + Na(+)(out) + H(+)(in) = L-cysteine(in) + Na(+)(in) + H(+)(out). Its activity is regulated as follows. Not inhibited by lithium. Partial allosteric regulation on ions sodium binding. Functionally, symporter that cotransports neutral amino acids and sodium ions, coupled to an H(+) antiporter activity. Releases L-glutamine and glycine from astroglial cells and may participate in the glutamate/GABA-glutamine cycle and the NMDA receptors activation. In addition contributes significantly to L-glutamine uptake in retina, namely in ganglion and Mueller cells and, therefore participates in the retinal glutamate-glutamine cycle. The transport activity is pH sensitive, Li(+) tolerant, bidirectional and associated with large uncoupled fluxes of protons. The transport is electroneutral coupled to the cotransport of 1 Na(+) and the antiport of 1 H(+). May have particular importance for modulation of net hepatic glutamine flux. This chain is Sodium-coupled neutral amino acid transporter 5, found in Rattus norvegicus (Rat).